Consider the following 378-residue polypeptide: Probable pectin lyase A (378 aa).

The N-terminal stretch at 1-18 (MKYQGLLAIAGCIASASA) is a signal peptide. 2 cysteine pairs are disulfide-bonded: cysteine 81/cysteine 100 and cysteine 90/cysteine 224. N-linked (GlcNAc...) asparagine glycosylation occurs at asparagine 127. Arginine 254 is a catalytic residue. A disulfide bond links cysteine 321 and cysteine 329.

Belongs to the polysaccharide lyase 1 family.

The protein resides in the secreted. It catalyses the reaction Eliminative cleavage of (1-&gt;4)-alpha-D-galacturonan methyl ester to give oligosaccharides with 4-deoxy-6-O-methyl-alpha-D-galact-4-enuronosyl groups at their non-reducing ends.. Pectinolytic enzymes consist of four classes of enzymes: pectin lyase, polygalacturonase, pectin methylesterase and rhamnogalacturonase. Among pectinolytic enzymes, pectin lyase is the most important in depolymerization of pectin, since it cleaves internal glycosidic bonds of highly methylated pectins. This is Probable pectin lyase A (pelA) from Neosartorya fischeri (strain ATCC 1020 / DSM 3700 / CBS 544.65 / FGSC A1164 / JCM 1740 / NRRL 181 / WB 181) (Aspergillus fischerianus).